The primary structure comprises 279 residues: Dehydrogenase/reductase SDR family member 4 (279 aa).

Position 37–61 (37–61 (LVTASTDGIGFAIARRLAQDGAHVV)) interacts with NADP(+). Residue K93 is modified to N6-acetyllysine; alternate. K93 is subject to N6-succinyllysine; alternate. K106 carries the N6-acetyllysine modification. S170 provides a ligand contact to substrate. Catalysis depends on Y183, which acts as the Proton acceptor. Position 187 (K187) interacts with NADP(+). S221 carries the phosphoserine modification. N6-succinyllysine is present on K235. A Peroxisomal targeting signal motif is present at residues 277–279 (SHL).

It belongs to the short-chain dehydrogenases/reductases (SDR) family. In terms of assembly, homotetramer.

The protein resides in the peroxisome. It carries out the reaction a secondary alcohol + NADP(+) = a ketone + NADPH + H(+). It catalyses the reaction 3alpha-hydroxy-5beta-pregnan-20-one + NADP(+) = 5beta-pregnan-3,20-dione + NADPH + H(+). The catalysed reaction is 5beta-dihydrotestosterone + NADPH + H(+) = 5beta-androstane-3alpha,17beta-diol + NADP(+). The enzyme catalyses all-trans-retinol + NADP(+) = all-trans-retinal + NADPH + H(+). It carries out the reaction isatin + NADPH + H(+) = 3-hydroxyindolin-2-one + NADP(+). Its function is as follows. NADPH-dependent oxidoreductase which catalyzes the reduction of a variety of compounds bearing carbonyl groups including ketosteroids, alpha-dicarbonyl compounds, aldehydes, aromatic ketones and quinones. Reduces all-trans-retinal and 9-cis retinal. Reduces 3-ketosteroids and benzil into 3alpha-hydroxysteroids and S-benzoin, respectively, in contrast to the stereoselectivity of primates DHRS4s which produce 3beta-hydroxysteroids and R-benzoin. In the reverse reaction, catalyzes the NADP-dependent oxidation of 3alpha-hydroxysteroids and alcohol, but with much lower efficiency. Involved in the metabolism of 3alpha-hydroxysteroids, retinoid, isatin and xenobiotic carbonyl compounds. The polypeptide is Dehydrogenase/reductase SDR family member 4 (DHRS4) (Bos taurus (Bovine)).